Consider the following 323-residue polypeptide: Acetyl-coenzyme A carboxylase carboxyl transferase subunit alpha (323 aa).

A CoA carboxyltransferase C-terminal domain is found at 39 to 293 (RLSKKSQQLT…RRALADSLRQ (255 aa)).

It belongs to the AccA family. Acetyl-CoA carboxylase is a heterohexamer composed of biotin carboxyl carrier protein (AccB), biotin carboxylase (AccC) and two subunits each of ACCase subunit alpha (AccA) and ACCase subunit beta (AccD).

It is found in the cytoplasm. It carries out the reaction N(6)-carboxybiotinyl-L-lysyl-[protein] + acetyl-CoA = N(6)-biotinyl-L-lysyl-[protein] + malonyl-CoA. The protein operates within lipid metabolism; malonyl-CoA biosynthesis; malonyl-CoA from acetyl-CoA: step 1/1. In terms of biological role, component of the acetyl coenzyme A carboxylase (ACC) complex. First, biotin carboxylase catalyzes the carboxylation of biotin on its carrier protein (BCCP) and then the CO(2) group is transferred by the carboxyltransferase to acetyl-CoA to form malonyl-CoA. This chain is Acetyl-coenzyme A carboxylase carboxyl transferase subunit alpha, found in Burkholderia vietnamiensis (strain G4 / LMG 22486) (Burkholderia cepacia (strain R1808)).